Consider the following 309-residue polypeptide: Transaldolase (309 aa).

Lysine 125 acts as the Schiff-base intermediate with substrate in catalysis.

This sequence belongs to the transaldolase family. Type 1 subfamily. As to quaternary structure, homodimer.

It localises to the cytoplasm. The catalysed reaction is D-sedoheptulose 7-phosphate + D-glyceraldehyde 3-phosphate = D-erythrose 4-phosphate + beta-D-fructose 6-phosphate. It participates in carbohydrate degradation; pentose phosphate pathway; D-glyceraldehyde 3-phosphate and beta-D-fructose 6-phosphate from D-ribose 5-phosphate and D-xylulose 5-phosphate (non-oxidative stage): step 2/3. Functionally, transaldolase is important for the balance of metabolites in the pentose-phosphate pathway. This Pseudomonas syringae pv. tomato (strain ATCC BAA-871 / DC3000) protein is Transaldolase.